The following is a 511-amino-acid chain: ATP synthase subunit alpha (511 aa).

An ATP-binding site is contributed by glycine 169–threonine 176.

This sequence belongs to the ATPase alpha/beta chains family. In terms of assembly, F-type ATPases have 2 components, CF(1) - the catalytic core - and CF(0) - the membrane proton channel. CF(1) has five subunits: alpha(3), beta(3), gamma(1), delta(1), epsilon(1). CF(0) has three main subunits: a(1), b(2) and c(9-12). The alpha and beta chains form an alternating ring which encloses part of the gamma chain. CF(1) is attached to CF(0) by a central stalk formed by the gamma and epsilon chains, while a peripheral stalk is formed by the delta and b chains.

Its subcellular location is the cell inner membrane. It catalyses the reaction ATP + H2O + 4 H(+)(in) = ADP + phosphate + 5 H(+)(out). In terms of biological role, produces ATP from ADP in the presence of a proton gradient across the membrane. The alpha chain is a regulatory subunit. The protein is ATP synthase subunit alpha of Janthinobacterium sp. (strain Marseille) (Minibacterium massiliensis).